Here is a 204-residue protein sequence, read N- to C-terminus: Proteasome subunit beta type-3-A (204 aa).

It belongs to the peptidase T1B family. Component of the 20S core complex of the 26S proteasome. The 26S proteasome is composed of a core protease (CP), known as the 20S proteasome, capped at one or both ends by the 19S regulatory particle (RP/PA700). The 20S proteasome core is composed of 28 subunits that are arranged in four stacked rings, resulting in a barrel-shaped structure. The two end rings are each formed by seven alpha subunits, and the two central rings are each formed by seven beta subunits. The catalytic chamber with the active sites is on the inside of the barrel.

Its subcellular location is the cytoplasm. It localises to the nucleus. Non-catalytic component of the proteasome, a multicatalytic proteinase complex which is characterized by its ability to cleave peptides with Arg, Phe, Tyr, Leu, and Glu adjacent to the leaving group at neutral or slightly basic pH. The proteasome has an ATP-dependent proteolytic activity. This is Proteasome subunit beta type-3-A (PBC1) from Arabidopsis thaliana (Mouse-ear cress).